A 79-amino-acid polypeptide reads, in one-letter code: Pigment-dispersing hormone type 1 (79 aa).

The signal sequence occupies residues 1 to 22; that stretch reads MRSAVVVALLVMVAMSLQLTAA. The residue at position 76 (A76) is an Alanine amide.

Belongs to the arthropod PDH family. As to expression, eyestalk.

It localises to the secreted. In terms of biological role, the pigment-dispersing hormone causes the migration of the distal retinal pigment into the proximal end of the pigment chromatophore cells and thus decreases the amount of light entering the retinulas. May also function as a neurotransmitter and/or neuromodulator. This Penaeus vannamei (Whiteleg shrimp) protein is Pigment-dispersing hormone type 1 (PDH1).